We begin with the raw amino-acid sequence, 657 residues long: Replication restart protein PriA (657 aa).

In terms of domain architecture, Helicase ATP-binding spans 143–309; sequence ITASTGARSF…LRGAVRRLPL (167 aa). 156 to 163 lines the ATP pocket; sequence GVTGSGKT. Residues 252-255 carry the DEAH box motif; sequence DEEH. Residues cysteine 366, cysteine 369, cysteine 375, cysteine 378, cysteine 393, cysteine 396, cysteine 406, and cysteine 409 each coordinate Zn(2+). In terms of domain architecture, Helicase C-terminal spans 390–570; sequence AMQCHYCGRQ…PFVRLIRFVF (181 aa).

Belongs to the helicase family. PriA subfamily. In terms of assembly, component of the replication restart primosome. It depends on Zn(2+) as a cofactor.

The catalysed reaction is Couples ATP hydrolysis with the unwinding of duplex DNA by translocating in the 3'-5' direction.. It catalyses the reaction ATP + H2O = ADP + phosphate + H(+). In terms of biological role, initiates the restart of stalled replication forks, which reloads the replicative helicase on sites other than the origin of replication. Recognizes and binds to abandoned replication forks and remodels them to uncover a helicase loading site. Promotes assembly of the primosome at these replication forks. The sequence is that of Replication restart protein PriA from Treponema pallidum (strain Nichols).